Here is a 289-residue protein sequence, read N- to C-terminus: ATP synthase subunit a (289 aa).

A run of 7 helical transmembrane segments spans residues 41-61 (KATA…WLGF), 101-121 (YLLV…IPAA), 129-149 (IAVP…AGIK), 166-186 (TAPL…TLIV), 189-209 (FTLA…LLVF), 222-242 (FVFG…ELVI), and 244-264 (ALQA…AMAH).

This sequence belongs to the ATPase A chain family. In terms of assembly, F-type ATPases have 2 components, CF(1) - the catalytic core - and CF(0) - the membrane proton channel. CF(1) has five subunits: alpha(3), beta(3), gamma(1), delta(1), epsilon(1). CF(0) has three main subunits: a(1), b(2) and c(9-12). The alpha and beta chains form an alternating ring which encloses part of the gamma chain. CF(1) is attached to CF(0) by a central stalk formed by the gamma and epsilon chains, while a peripheral stalk is formed by the delta and b chains.

The protein localises to the cell membrane. Key component of the proton channel; it plays a direct role in the translocation of protons across the membrane. The chain is ATP synthase subunit a from Frankia alni (strain DSM 45986 / CECT 9034 / ACN14a).